A 189-amino-acid polypeptide reads, in one-letter code: Chitin synthase 1 (189 aa).

The protein belongs to the chitin synthase family. Class I subfamily.

It is found in the cell membrane. It catalyses the reaction [(1-&gt;4)-N-acetyl-beta-D-glucosaminyl](n) + UDP-N-acetyl-alpha-D-glucosamine = [(1-&gt;4)-N-acetyl-beta-D-glucosaminyl](n+1) + UDP + H(+). Its function is as follows. Polymerizes chitin, a structural polymer of the cell wall and septum, by transferring the sugar moiety of UDP-GlcNAc to the non-reducing end of the growing chitin polymer. The protein is Chitin synthase 1 (CHS1) of Ajellomyces capsulatus (Darling's disease fungus).